A 73-amino-acid chain; its full sequence is Translation initiation factor IF-1 (73 aa).

Residues 1–73 enclose the S1-like domain; it reads MANKEELIEF…TKGRITYRAR (73 aa).

This sequence belongs to the IF-1 family. In terms of assembly, component of the 30S ribosomal translation pre-initiation complex which assembles on the 30S ribosome in the order IF-2 and IF-3, IF-1 and N-formylmethionyl-tRNA(fMet); mRNA recruitment can occur at any time during PIC assembly.

The protein resides in the cytoplasm. One of the essential components for the initiation of protein synthesis. Stabilizes the binding of IF-2 and IF-3 on the 30S subunit to which N-formylmethionyl-tRNA(fMet) subsequently binds. Helps modulate mRNA selection, yielding the 30S pre-initiation complex (PIC). Upon addition of the 50S ribosomal subunit IF-1, IF-2 and IF-3 are released leaving the mature 70S translation initiation complex. The protein is Translation initiation factor IF-1 of Acinetobacter baumannii (strain ATCC 17978 / DSM 105126 / CIP 53.77 / LMG 1025 / NCDC KC755 / 5377).